A 940-amino-acid polypeptide reads, in one-letter code: AP-2 complex subunit alpha (940 aa).

Phosphoserine occurs at positions 632 and 634. Residues 651–662 (SHSKLNNSNANT) show a composition bias toward polar residues. The interval 651-679 (SHSKLNNSNANTDLLGLSTPPSNNIGSGS) is disordered. Residues 668 to 679 (STPPSNNIGSGS) are compositionally biased toward low complexity.

This sequence belongs to the adaptor complexes large subunit family. As to quaternary structure, adaptor protein complex 2 (AP-2) is a heterotetramer composed of two large adaptins (alpha-type and beta-type subunits), a medium adaptin (mu-type subunit AP50) and a small adaptin (sigma-type subunit AP17). Expressed in the Garland cells, imaginal disks, adult midgut precursors, the antenno-maxillary complex, the endoderm, the fat bodies, and the visceral mesoderm and cells of the CNS and PNS including neuroblasts, the presumptive stomatogastric nervous system, and the lateral chordotonal sense organs.

Its subcellular location is the cell membrane. The protein resides in the membrane. It is found in the coated pit. In terms of biological role, adaptins are components of the adapter complexes which link clathrin to receptors in coated vesicles. Clathrin-associated protein complexes are believed to interact with the cytoplasmic tails of membrane proteins, leading to their selection and concentration. AP-2alpha is a subunit of the plasma membrane adapter. The polypeptide is AP-2 complex subunit alpha (AP-2alpha) (Drosophila melanogaster (Fruit fly)).